A 109-amino-acid polypeptide reads, in one-letter code: Cortistatin (109 aa).

The N-terminal stretch at Met-1–Ala-25 is a signal peptide. A propeptide spanning residues Ser-26–Asp-93 is cleaved from the precursor. A disordered region spans residues Ala-64 to Cys-97. Cys-97 and Cys-108 form a disulfide bridge.

It belongs to the somatostatin family. As to expression, expressed in a subset of GABAergic cells in the cortex and hippocampus.

The protein resides in the secreted. In Mus musculus (Mouse), this protein is Cortistatin (Cort).